The primary structure comprises 500 residues: NAD(P)H-quinone oxidoreductase chain 4, chloroplastic (500 aa).

Helical transmembrane passes span 4–24 (FPWLTIIIVLPIFAGFLILFL), 37–57 (LCICIIELLLTTYAFGYHFQL), 84–104 (GISIGPILLTGFITTLATLAA), 111–129 (SRVFHFLMLAMYSGQIGPF), 134–154 (LLLFFIMWELELIPVYLLLSM), 167–187 (FILYTAGSSAFLLVGILGICL), 208–228 (ALEMLFYIGFFIAFAVKSPII), 242–262 (HYSTCMLLAGILLKMGAYGLV), 272–292 (AHSIFSPWLMIVGTIQIIYAA), 305–325 (IAYSSVSHMGFIIIGLGSIND), 330–350 (GAILQIISHGFIGAALFFLAG), 386–406 (LALPGMSGFVAELILFFGILT), 416–436 (ILITFVMAIGMILTPIYSLSM), and 462–482 (FFVSISILLPVIAIGIYPDFV).

It belongs to the complex I subunit 4 family.

The protein resides in the plastid. It localises to the chloroplast thylakoid membrane. It carries out the reaction a plastoquinone + NADH + (n+1) H(+)(in) = a plastoquinol + NAD(+) + n H(+)(out). It catalyses the reaction a plastoquinone + NADPH + (n+1) H(+)(in) = a plastoquinol + NADP(+) + n H(+)(out). The chain is NAD(P)H-quinone oxidoreductase chain 4, chloroplastic from Morus indica (Mulberry).